A 152-amino-acid chain; its full sequence is Xanthine-guanine phosphoribosyltransferase (152 aa).

Residues 37–38 (RG) and 88–96 (DDLVDTGNT) each bind 5-phospho-alpha-D-ribose 1-diphosphate. Asp-89 provides a ligand contact to Mg(2+). Positions 92 and 135 each coordinate guanine. Residues Asp-92 and Ile-135 each contribute to the xanthine site. Residues 92 to 96 (DTGNT) and 134 to 135 (WI) contribute to the GMP site.

This sequence belongs to the purine/pyrimidine phosphoribosyltransferase family. XGPT subfamily. As to quaternary structure, homotetramer. The cofactor is Mg(2+).

The protein resides in the cell inner membrane. It catalyses the reaction GMP + diphosphate = guanine + 5-phospho-alpha-D-ribose 1-diphosphate. The catalysed reaction is XMP + diphosphate = xanthine + 5-phospho-alpha-D-ribose 1-diphosphate. The enzyme catalyses IMP + diphosphate = hypoxanthine + 5-phospho-alpha-D-ribose 1-diphosphate. It functions in the pathway purine metabolism; GMP biosynthesis via salvage pathway; GMP from guanine: step 1/1. Its pathway is purine metabolism; XMP biosynthesis via salvage pathway; XMP from xanthine: step 1/1. Purine salvage pathway enzyme that catalyzes the transfer of the ribosyl-5-phosphate group from 5-phospho-alpha-D-ribose 1-diphosphate (PRPP) to the N9 position of the 6-oxopurines guanine and xanthine to form the corresponding ribonucleotides GMP (guanosine 5'-monophosphate) and XMP (xanthosine 5'-monophosphate), with the release of PPi. To a lesser extent, also acts on hypoxanthine. This Mannheimia succiniciproducens (strain KCTC 0769BP / MBEL55E) protein is Xanthine-guanine phosphoribosyltransferase.